A 536-amino-acid chain; its full sequence is Formate--tetrahydrofolate ligase (536 aa).

Residue 51 to 58 (TPAGEGKT) participates in ATP binding.

It belongs to the formate--tetrahydrofolate ligase family.

The catalysed reaction is (6S)-5,6,7,8-tetrahydrofolate + formate + ATP = (6R)-10-formyltetrahydrofolate + ADP + phosphate. Its pathway is one-carbon metabolism; tetrahydrofolate interconversion. In Thermoplasma acidophilum (strain ATCC 25905 / DSM 1728 / JCM 9062 / NBRC 15155 / AMRC-C165), this protein is Formate--tetrahydrofolate ligase.